The sequence spans 1065 residues: Ceruloplasmin (1065 aa).

The first 19 residues, 1–19 (MKILILGIFLFLCSTPAWA), serve as a signal peptide directing secretion. Plastocyanin-like domains are found at residues 20–200 (KEKH…LIIC) and 209–357 (KEKH…VQEC). Tyr-55, Gly-64, and Tyr-67 together coordinate Na(+). Cu(2+)-binding residues include His-120 and His-122. O2 is bound at residue His-120. Position 128 (Lys-128) interacts with Ca(2+). N-linked (GlcNAc...) (complex) asparagine glycosylation is present at Asn-138. The Ca(2+) site is built by Gln-143, Asp-146, and Asp-147. The cysteines at positions 174 and 200 are disulfide-linked. Cu(2+) is bound by residues His-180 and His-182. Residue His-180 coordinates O2. Ser-256 contacts Na(+). An intrachain disulfide couples Cys-276 to Cys-357. Cu(2+) contacts are provided by His-295, Cys-338, and His-343. Asn-358 and Asn-397 each carry an N-linked (GlcNAc...) (complex) asparagine glycan. Plastocyanin-like domains lie at 370-560 (HVRH…MKIC) and 570-718 (RQKD…VNQC). The Na(+) site is built by Phe-408, Gly-417, and Tyr-420. A disulfide bridge links Cys-534 with Cys-560. A glycan (N-linked (GlcNAc...) asparagine) is linked at Asn-588. Residue Ser-617 participates in Na(+) binding. An intrachain disulfide couples Cys-637 to Cys-718. Cu(2+)-binding residues include His-656, Cys-699, His-704, and Met-709. Cys-699 acts as the Nucleophile; for glutathione peroxidase activity in catalysis. Residue Ser-722 is modified to Phosphoserine; by FAM20C. Plastocyanin-like domains follow at residues 730–900 (GERT…LIVC) and 908–1061 (FNPR…QNED). Residue Asn-762 is glycosylated (N-linked (GlcNAc...) (complex) asparagine). Residues Phe-767, Gly-776, and Tyr-779 each contribute to the Na(+) site. Residues Cys-874 and Cys-900 are joined by a disulfide bond. Asn-926 carries N-linked (GlcNAc...) asparagine glycosylation. Ser-955 is a Na(+) binding site. 8 residues coordinate Cu(2+): His-994, His-997, His-999, His-1039, Cys-1040, His-1041, His-1045, and Met-1050. His-997 and His-999 together coordinate O2. His-1041 is an O2 binding site.

This sequence belongs to the multicopper oxidase family. In terms of assembly, found in a complex with MPO and LTF; interacts directly with MPO and LTF, which allows Fe(3+) incorporation into LTF, activation of CP ferroxidase activity and protection of CP antioxidant properties by MPO. Cu(2+) is required as a cofactor. As to expression, expressed by the liver and secreted in plasma.

It is found in the secreted. The catalysed reaction is 4 Fe(2+) + O2 + 4 H(+) = 4 Fe(3+) + 2 H2O. It carries out the reaction 4 Cu(+) + O2 + 4 H(+) = 4 Cu(2+) + 2 H2O. The enzyme catalyses a hydroperoxide + 2 glutathione = an alcohol + glutathione disulfide + H2O. It catalyses the reaction 4 nitric oxide + O2 + 2 H2O = 4 nitrite + 4 H(+). The catalysed reaction is 2 glutathione + H2O2 = glutathione disulfide + 2 H2O. Functionally, multifunctional blue, copper-binding (6-7 atoms per molecule) glycoprotein. It has ferroxidase activity oxidizing Fe(2+) to Fe(3+) without releasing radical oxygen species. It is involved in iron transport across the cell membrane. Copper ions provide a large number of enzymatic activites. Oxidizes highly toxic ferrous ions to the ferric state for further incorporation onto apo-transferrins, catalyzes Cu(+) oxidation and promotes the oxidation of biogenic amines such as norepinephrin and serotonin. Provides Cu(2+) ions for the ascorbate-mediated deaminase degradation of the heparan sulfate chains of GPC1. Has glutathione peroxidase-like activity, can remove both hydrogen peroxide and lipid hydroperoxide in the presence of thiols. Also shows NO-oxidase and NO2 synthase activities that determine endocrine NO homeostasis. The polypeptide is Ceruloplasmin (Homo sapiens (Human)).